A 106-amino-acid chain; its full sequence is ATP-dependent Clp protease adapter protein ClpS (106 aa).

The protein belongs to the ClpS family. In terms of assembly, binds to the N-terminal domain of the chaperone ClpA.

Functionally, involved in the modulation of the specificity of the ClpAP-mediated ATP-dependent protein degradation. The polypeptide is ATP-dependent Clp protease adapter protein ClpS (Yersinia pestis bv. Antiqua (strain Antiqua)).